A 519-amino-acid polypeptide reads, in one-letter code: MKGSPVLAVCAAALTLIPSVVALPMIDKDLPSSISQSSDKTSQERAEAVKAAFRFAWEGYLEHAFPNDELHPVSNTPGNSRNGWGASAVDALSTAIIMDMPDVVEKILDHISNIDYSQTDTMCSLFETTIRYLGGMISAYDLLKGPGSHLVSDPAKVDVLLAQSLKLADVLKFAFDTKTGIPANELNITDKSTDGSTTNGLATTGTLVLEWTRLSDITGDPEYGRLAQKGESYLLNPQPSSSEPFPGLVGRTIDIETGLFRDDYVSWGGGSDSFYEYLIKMYVYDKGRFGKYKDRWVTAAESTIEHLKSSPSTRKDLTFVATYSGGRLGLNSGHLTCFDGGNFLLGGQILNRDDFTKFGLELVEGCYATYAATATKIGPEGFGWDATKVPEAQAEFYKEAGFYITTSYYNLRPEVIESIYYAYRMTKDPKYQEWAWDAFVAINATTRTSTGFTAIGDVNTPDGGRKYDNQESFLFAEVMKYSYLIHSPEADWQVAGPGGTNAYVFNTEAHPVKVFSRGC.

An N-terminal signal peptide occupies residues 1–22 (MKGSPVLAVCAAALTLIPSVVA). A glycan (N-linked (GlcNAc...) asparagine) is linked at Asn-187. A disulfide bridge connects residues Cys-337 and Cys-366. Glu-380 serves as the catalytic Proton donor. N-linked (GlcNAc...) asparagine glycosylation occurs at Asn-443. Thr-507 is a Ca(2+) binding site.

This sequence belongs to the glycosyl hydrolase 47 family. Monomer. It depends on Ca(2+) as a cofactor. Mg(2+) is required as a cofactor.

Its subcellular location is the secreted. The enzyme catalyses N(4)-(alpha-D-Man-(1-&gt;2)-alpha-D-Man-(1-&gt;2)-alpha-D-Man-(1-&gt;3)-[alpha-D-Man-(1-&gt;2)-alpha-D-Man-(1-&gt;3)-[alpha-D-Man-(1-&gt;2)-alpha-D-Man-(1-&gt;6)]-alpha-D-Man-(1-&gt;6)]-beta-D-Man-(1-&gt;4)-beta-D-GlcNAc-(1-&gt;4)-beta-D-GlcNAc)-L-asparaginyl-[protein] (N-glucan mannose isomer 9A1,2,3B1,2,3) + 4 H2O = N(4)-(alpha-D-Man-(1-&gt;3)-[alpha-D-Man-(1-&gt;3)-[alpha-D-Man-(1-&gt;6)]-alpha-D-Man-(1-&gt;6)]-beta-D-Man-(1-&gt;4)-beta-D-GlcNAc-(1-&gt;4)-beta-D-GlcNAc)-L-asparaginyl-[protein] (N-glucan mannose isomer 5A1,2) + 4 beta-D-mannose. The catalysed reaction is N(4)-(alpha-D-Man-(1-&gt;2)-alpha-D-Man-(1-&gt;2)-alpha-D-Man-(1-&gt;3)-[alpha-D-Man-(1-&gt;3)-[alpha-D-Man-(1-&gt;2)-alpha-D-Man-(1-&gt;6)]-alpha-D-Man-(1-&gt;6)]-beta-D-Man-(1-&gt;4)-beta-D-GlcNAc-(1-&gt;4)-beta-D-GlcNAc)-L-asparaginyl-[protein] (N-glucan mannose isomer 8A1,2,3B1,3) + 3 H2O = N(4)-(alpha-D-Man-(1-&gt;3)-[alpha-D-Man-(1-&gt;3)-[alpha-D-Man-(1-&gt;6)]-alpha-D-Man-(1-&gt;6)]-beta-D-Man-(1-&gt;4)-beta-D-GlcNAc-(1-&gt;4)-beta-D-GlcNAc)-L-asparaginyl-[protein] (N-glucan mannose isomer 5A1,2) + 3 beta-D-mannose. It participates in protein modification; protein glycosylation. Functionally, alpha-mannosidase involved in the maturation of Asn-linked oligosaccharides. Progressively trims alpha-1,2-linked mannose residues from Man(9)GlcNAc(2) to produce Man(5)GlcNAc(2). The sequence is that of Mannosyl-oligosaccharide alpha-1,2-mannosidase from Coccidioides posadasii (strain RMSCC 757 / Silveira) (Valley fever fungus).